A 284-amino-acid polypeptide reads, in one-letter code: Tropomyosin Per a 7.0101 (284 aa).

Residues 22 to 266 are a coiled coil; that stretch reads ALLCEQQARD…EDELVHEKEK (245 aa).

Belongs to the tropomyosin family. Homodimer.

Functionally, tropomyosin, in association with the troponin complex, plays a central role in the calcium dependent regulation of muscle contraction. The protein is Tropomyosin Per a 7.0101 of Periplaneta americana (American cockroach).